Reading from the N-terminus, the 326-residue chain is MNVVKYIIFSFALAPLLLVNANTYNFTQIQKRSVNQAVLESSQDTNSVGGEASSTACPLFTTIYTNGITPGTTTIYPTSISTSGVSSNNIDETSVSSESIITSTITTTITSGSQLYTTTITGQNTPVDTVEVVIPTAGTFTTTLTSGSSYPVATTTVRTASGTQSGEVEVITPSCGCSPENSFHLKIDNDKISPSYVYMDPNAPVRTNGAGREGNMFASTNGDNEGLNLFYYDSTIQRVLTCDCQRPSYTVYIEDPIIGNGFSSAWNLIKNSDGIFTPVESRNNEPLHFHVDNNGRVWMTSQEYDTEVSSTDERNFRANDVTLQLY.

An N-terminal signal peptide occupies residues 1 to 21 (MNVVKYIIFSFALAPLLLVNA). N-linked (GlcNAc...) asparagine glycosylation is present at asparagine 25. 2 tandem repeats follow at residues 103-137 (STIT…IPTA) and 138-175 (GTFT…TPSC). The tract at residues 103 to 175 (STITTTITSG…GEVEVITPSC (73 aa)) is 2 X 36 AA approximate tandem repeats. The region spanning 164 to 326 (QSGEVEVITP…RANDVTLQLY (163 aa)) is the DIPSY domain.

Belongs to the mam3/map4 family.

It is found in the cell surface. In terms of biological role, may be involved in agglutination during conjugation or other aspects of colony formation. Induces flocculation when overexpressed. This is Putative cell agglutination protein pfl9 from Schizosaccharomyces pombe (strain 972 / ATCC 24843) (Fission yeast).